The primary structure comprises 766 residues: Disabled homolog 2 (766 aa).

A compositionally biased stretch (polar residues) spans 1–16 (MSNEVETSTTNGQPDQ). The tract at residues 1–36 (MSNEVETSTTNGQPDQQAAPKAPSKKEKKKGSEKTD) is disordered. Ser-2 is modified (N-acetylserine). Ser-2 carries the post-translational modification Phosphoserine. A PID domain is found at 45–196 (GDGVKYKAKL…KAEENGSEAL (152 aa)). At Tyr-170 the chain carries Phosphotyrosine. Phosphoserine is present on Ser-193. A required for localization to clathrin-coated pits region spans residues 230-447 (ESKDILLVDL…KPGRGRRTAK (218 aa)). Disordered stretches follow at residues 284–482 (LNFF…NFLD), 596–630 (PPPT…LKDI), 659–683 (RQPP…FSSY), and 699–766 (DFDA…NPFA). Short sequence motifs (DPF) lie at residues 293-295 (DPF) and 298-300 (DPF). Composition is skewed to polar residues over residues 303 to 334 (PDQS…QSKG) and 367 to 381 (PSSQ…QNGV). The residue at position 323 (Ser-323) is a Phosphoserine. Phosphoserine; in mitosis is present on residues Ser-326 and Ser-328. Ser-401 is subject to Phosphoserine. Polar residues predominate over residues 467–480 (MSPTGQPAVPQSNF). A compositionally biased stretch (low complexity) spans 600–612 (MSTQSSPQPMMSS). A sufficient for interaction with GRB2 region spans residues 600–730 (MSTQSSPQPM…VLLGTKSADN (131 aa)). The interval 617-625 (PPQPPPRNG) is required for interaction with CSK. Positions 647–766 (KEVKEMFKDF…HRSPFGNPFA (120 aa)) are required for interaction with MYO6. Positions 661–669 (PPLVPSRKG) are required for interaction with GRB2 and CSK. Thr-671 is modified (phosphothreonine). The segment covering 673 to 683 (PSGTSSAFSSY) has biased composition (polar residues). The tract at residues 707 to 723 (NKINEPPKPAPRQGVLL) is sufficient for interaction with SH3KBP1 SH3 domain. 2 positions are modified to phosphoserine: Ser-727 and Ser-759. The span at 727-753 (SADNSLENPFSKGFSSSNPSVVSQPAS) shows a compositional bias: polar residues.

As to quaternary structure, interacts (via NPXY motif) with DAB2 (via PID domain). Can interact (via PID domain) with LDLR, APP, APLP1 and APLP2, and weakly with INPP5D (via NPXY motifs); the interaction is impaired by tyrosine phosphorylation of the respective NPXY motifs. Can weakly interact (via PID domain) with LRP1 (via NPXY motif); the interaction is enhanced by tyrosine phosphorylation of the NPXY motif. Interacts with LRP2 (via NPXY motif); the interaction is not affected by tyrosine phosphorylation of the NPXY motif. Interacts with clathrin; in vitro can assemble clathrin triskelia into polyhedral coats. Interacts with AP2A2, ITGB1, ITGB3, ITGB5, PIAS2, DAB2IP, NOSTRIN, FCHO1, DVL3 and EPS15L1. Interacts with SH3KBP1 (via SH3 domains). Interacts with GRB2; competes with SOS1 for binding to GRB2 and the interaction is enhanced by EGF and NT-3 stimulation. Isoform p96 interacts with EPS15 and ITSN1; isoform p67 does not interact with EPS15 and only weakly interacts with ITSN1. Interacts with MAP3K7; the interaction is induced by TGF-beta stimulation and may mediate TGF-beta stimulated JNK activation. Interacts with AXIN1 and PPP1CA; the interactions are mutually exclusive. Interacts with the globular tail of MYO6. Interacts (via DPF motifs) with FCHO2; the interaction is direct and required for DAB2-mediated LDLR endocytosis. Interacts with LRP6; the interaction involves LRP6 phosphorylation by CK2 and sequesters LRP6 towards clathrin-mediated endocytosis. Associates with the TGF-beta receptor complex. Interacts with SMAD2 and SMAD3; the interactions are enhanced upon TGF-beta stimulation. Interacts with GRB2; the interaction is enhanced by EGF and NT-3 stimulation. Interacts with SRC; the interaction is enhanced by EGF stimulation. Phosphorylated on serine residues in response to mitogenic growth-factor stimulation. Phosphorylation during mitosis is leading to membrane displacement. As to expression, isoform p96 and isoform p67 are expressed in adult kidney and fibroblasts with isoform p96 being the predominant form. Isoform p67 is the predominant isoform expressed in embryonic visceral endoderm.

The protein resides in the cytoplasmic vesicle. Its subcellular location is the clathrin-coated vesicle membrane. The protein localises to the membrane. It is found in the clathrin-coated pit. It localises to the cytoplasm. The protein resides in the nucleus. Functionally, adapter protein that functions as a clathrin-associated sorting protein (CLASP) required for clathrin-mediated endocytosis of selected cargo proteins. Can bind and assemble clathrin, and binds simultaneously to phosphatidylinositol 4,5-bisphosphate (PtdIns(4,5)P2) and cargos containing non-phosphorylated NPXY internalization motifs, such as the LDL receptor, to recruit them to clathrin-coated pits. Can function in clathrin-mediated endocytosis independently of the AP-2 complex. Involved in endocytosis of integrin beta-1; this function seems to redundant with the AP-2 complex and seems to require DAB2 binding to endocytosis accessory EH domain-containing proteins such as EPS15, EPS15L1 and ITSN1. Involved in endocytosis of cystic fibrosis transmembrane conductance regulator/CFTR. Isoform p96 is involved in endocytosis of megalin/LRP2 lipoprotein receptor during embryonal development. Required for recycling of the TGF-beta receptor. Isoform p67 is not involved in LDL receptor endocytosis. Involved in CFTR trafficking to the late endosome. Involved in several receptor-mediated signaling pathways. Involved in TGF-beta receptor signaling and facilitates phosphorylation of the signal transducer SMAD2. Mediates TFG-beta-stimulated JNK activation. May inhibit the canoniocal Wnt/beta-catenin signaling pathway by stabilizing the beta-catenin destruction complex through a competing association with axin preventing its dephosphorylation through protein phosphatase 1 (PP1). Sequesters LRP6 towards clathrin-mediated endocytosis, leading to inhibition of Wnt/beta-catenin signaling. May activate non-canonical Wnt signaling. In cell surface growth factor/Ras signaling pathways proposed to inhibit ERK activation by interrupting the binding of GRB2 to SOS1 and to inhibit SRC by preventing its activating phosphorylation at 'Tyr-419'. Proposed to be involved in modulation of androgen receptor (AR) signaling mediated by SRC activation; seems to compete with AR for interaction with SRC. Plays a role in the CSF-1 signal transduction pathway. Plays a role in cellular differentiation. Involved in cell positioning and formation of visceral endoderm (VE) during embryogenesis and proposed to be required in the VE to respond to Nodal signaling coming from the epiblast. Required for the epithelial to mesenchymal transition, a process necessary for proper embryonic development. May be involved in myeloid cell differentiation and can induce macrophage adhesion and spreading. Isoform p67 may be involved in transcriptional regulation. May act as a tumor suppressor. This is Disabled homolog 2 (Dab2) from Mus musculus (Mouse).